The primary structure comprises 512 residues: Methionine--tRNA ligase (512 aa).

Residues 12 to 22 carry the 'HIGH' region motif; that stretch reads YYVNDVPHIGH. The 'KMSKS' region motif lies at 295-299; it reads KISKS. Residue Lys298 participates in ATP binding.

The protein belongs to the class-I aminoacyl-tRNA synthetase family. MetG type 2B subfamily. As to quaternary structure, monomer.

The protein localises to the cytoplasm. It catalyses the reaction tRNA(Met) + L-methionine + ATP = L-methionyl-tRNA(Met) + AMP + diphosphate. Its function is as follows. Is required not only for elongation of protein synthesis but also for the initiation of all mRNA translation through initiator tRNA(fMet) aminoacylation. In Rickettsia felis (strain ATCC VR-1525 / URRWXCal2) (Rickettsia azadi), this protein is Methionine--tRNA ligase.